Here is a 616-residue protein sequence, read N- to C-terminus: Carboxylic acid transporter protein homolog (616 aa).

The segment covering 1 to 11 (MSSSITDEKIS) has biased composition (basic and acidic residues). Residues 1–65 (MSSSITDEKI…LYHNPSLPAQ (65 aa)) are disordered. Serine 2 carries the N-acetylserine modification. The Cytoplasmic segment spans residues 2-140 (SSSITDEKIS…LRKMTWQNWN (139 aa)). Phosphoserine is present on serine 4. Residue lysine 9 forms a Glycyl lysine isopeptide (Lys-Gly) (interchain with G-Cter in ubiquitin) linkage. 3 positions are modified to phosphoserine: serine 11, serine 61, and serine 66. Threonine 70 carries the post-translational modification Phosphothreonine. A helical transmembrane segment spans residues 141-161 (YFFMGYFAWLSAAWAFFCVSV). Residues 162–176 (SVAPLAELYDRPTKD) are Extracellular-facing. Residues 177–197 (ITWGLGLVLFVRSAGAVIFGL) traverse the membrane as a helical segment. The Cytoplasmic segment spans residues 198 to 205 (WTDKSSRK). A helical transmembrane segment spans residues 206–226 (WPYITCLFLFVIAQLCTPWCD). Residues 227-230 (TYEK) are Extracellular-facing. Residues 231-251 (FLGVRWITGIAMGGIYGCASA) traverse the membrane as a helical segment. The Cytoplasmic segment spans residues 252 to 263 (TAIEDAPVKARS). A helical membrane pass occupies residues 264–284 (FLSGLFFSAYAMGFIFAIIFY). The Extracellular portion of the chain corresponds to 285–296 (RAFGYFRDDGWK). Residues 297–317 (ILFWFSIFLPILLIFWRLLWP) traverse the membrane as a helical segment. Residues 318–363 (ETKYFTKVLKARKLILSDAVKANGGEPLPKANFKQKMVSMKRTVQK) lie on the Cytoplasmic side of the membrane. Lysine 338 participates in a covalent cross-link: Glycyl lysine isopeptide (Lys-Gly) (interchain with G-Cter in ubiquitin). The chain crosses the membrane as a helical span at residues 364–384 (YWLLFAYLVVLLVGPNYLTHA). Residues 385 to 402 (SQDLLPTMLRAQLGLSKD) are Extracellular-facing. Residues 403 to 423 (AVTVIVVVTNIGAICGGMIFG) form a helical membrane-spanning segment. The Cytoplasmic segment spans residues 424–432 (QFMEVTGRR). The chain crosses the membrane as a helical span at residues 433–453 (LGLLIACTMGGCFTYPAFMLR). Over 454–457 (SEKA) the chain is Extracellular. A helical transmembrane segment spans residues 458 to 478 (ILGAGFMLYFCVFGVWGILPI). Residues 479–489 (HLAELAPADAR) lie on the Cytoplasmic side of the membrane. A helical membrane pass occupies residues 490-510 (ALVAGLSYQLGNLASAAASTI). Residues 511 to 535 (ETQLADRYPLERDASGAVIKEDYAK) lie on the Extracellular side of the membrane. Residues 536–556 (VMAILTGSVFIFTFACVFVGH) form a helical membrane-spanning segment. The Cytoplasmic portion of the chain corresponds to 557 to 616 (EKFHRDLSSPVMKKYINQVEEYEADGLSISDIVEQKTECASVKMIDSNVSKTYEEHIETV). A phosphoserine mark is found at serine 584, serine 603, and serine 606.

The protein belongs to the major facilitator superfamily. Sugar transporter (TC 2.A.1.1) family.

It localises to the membrane. Essential to lactate transport. The sequence is that of Carboxylic acid transporter protein homolog (JEN1) from Saccharomyces cerevisiae (strain ATCC 204508 / S288c) (Baker's yeast).